The following is a 111-amino-acid chain: Large ribosomal subunit protein uL22 (111 aa).

This sequence belongs to the universal ribosomal protein uL22 family. In terms of assembly, part of the 50S ribosomal subunit.

This protein binds specifically to 23S rRNA; its binding is stimulated by other ribosomal proteins, e.g. L4, L17, and L20. It is important during the early stages of 50S assembly. It makes multiple contacts with different domains of the 23S rRNA in the assembled 50S subunit and ribosome. In terms of biological role, the globular domain of the protein is located near the polypeptide exit tunnel on the outside of the subunit, while an extended beta-hairpin is found that lines the wall of the exit tunnel in the center of the 70S ribosome. This is Large ribosomal subunit protein uL22 from Chlamydia trachomatis serovar L2b (strain UCH-1/proctitis).